Here is a 106-residue protein sequence, read N- to C-terminus: Large ribosomal subunit protein cL38 (106 aa).

Residues 1 to 39 constitute a chloroplast transit peptide; the sequence is MSVSAIFGTGIVTVAASPVLRQFQVPKLGNGGGLGMVIE. The disordered stretch occupies residues 42-70; sequence SRPQKKSTAHHRKTRPKKTQPWDIKRKPT. The span at 44-59 shows a compositional bias: basic residues; the sequence is PQKKSTAHHRKTRPKK.

The protein belongs to the chloroplast-specific ribosomal protein cL38 family. As to quaternary structure, part of the 50S ribosomal subunit.

It localises to the plastid. Its subcellular location is the chloroplast. This Arabidopsis thaliana (Mouse-ear cress) protein is Large ribosomal subunit protein cL38 (PSRP6).